A 543-amino-acid chain; its full sequence is Zinc finger protein 280B (543 aa).

Met-1 carries the post-translational modification N-acetylmethionine. The segment covering 1–10 (MEQSCEEEKE) has biased composition (acidic residues). A disordered region spans residues 1-23 (MEQSCEEEKEPEPQKNIQETKQV). 2 positions are modified to phosphoserine: Ser-68 and Ser-70. Residues 105-138 (SQLESRSTDSPIIIEPLSKPDYRNSSPQVVPNNS) are disordered. Residues 128–138 (NSSPQVVPNNS) are compositionally biased toward low complexity. Residues Lys-173, Lys-247, and Lys-261 each participate in a glycyl lysine isopeptide (Lys-Gly) (interchain with G-Cter in SUMO2) cross-link. 4 C2H2-type zinc fingers span residues 343–366 (TTCQ…ENVH), 373–396 (TVCK…KDHH), 432–454 (LLCP…YRGH), and 460–483 (HQCS…TQCH). The segment at 518–543 (ASITVSTSDSEPSLPRSKSKISKKSH) is disordered. Residues 534–543 (SKSKISKKSH) show a composition bias toward basic residues.

The protein localises to the nucleus. In terms of biological role, may function as a transcription factor. The chain is Zinc finger protein 280B (ZNF280B) from Homo sapiens (Human).